A 435-amino-acid chain; its full sequence is Homoserine dehydrogenase (435 aa).

The NADPH site is built by Thr13, Val14, and Lys104. NAD(+) is bound at residue Val14. NADP(+)-binding residues include Val14 and Lys104. Residues Glu128, Val131, Gly133, and Ile135 each contribute to the Na(+) site. Residues Gly186 and Glu189 each contribute to the NADP(+) site. Residues Glu189 and Asp200 each contribute to the L-homoserine site. Lys204 (proton donor) is an active-site residue. Residue Gly301 coordinates NADPH. Gly301 provides a ligand contact to NAD(+). Gly301 contributes to the NADP(+) binding site. The ACT domain maps to 354–429 (YLRVQAKDEP…CVEKPITMIR (76 aa)).

The protein belongs to the homoserine dehydrogenase family. In terms of assembly, homotetramer. It depends on a metal cation as a cofactor.

The catalysed reaction is L-homoserine + NAD(+) = L-aspartate 4-semialdehyde + NADH + H(+). It functions in the pathway amino-acid biosynthesis; L-methionine biosynthesis via de novo pathway; L-homoserine from L-aspartate: step 3/3. The protein operates within amino-acid biosynthesis; L-threonine biosynthesis; L-threonine from L-aspartate: step 3/5. Neither NaCl nor KCl increase the activity. L-threonine and L-serine do not markedly inhibit the oxidation activity. Functionally, catalyzes the conversion of L-aspartate-beta-semialdehyde (L-Asa) to L-homoserine (L-Hse), the third step in the biosynthesis of threonine and methionine from aspartate. Is highly specific for NAD(+), and displays an approximate 479-fold (kcat/Km) preference for NAD(+) over NADP(+). This chain is Homoserine dehydrogenase, found in Neisseria gonorrhoeae (strain ATCC 700825 / FA 1090).